The sequence spans 283 residues: N-terminal Xaa-Pro-Lys N-methyltransferase 2 (283 aa).

Residues Gly-124, Arg-129, Asp-146, 174-175, and Gln-190 each bind S-adenosyl-L-methionine; that span reads LQ.

This sequence belongs to the methyltransferase superfamily. NTM1 family.

Its subcellular location is the nucleus. It carries out the reaction N-terminal L-alanyl-L-prolyl-L-lysyl-[protein] + S-adenosyl-L-methionine = N-terminal N-methyl-L-alanyl-L-prolyl-L-lysyl-[protein] + S-adenosyl-L-homocysteine + H(+). It catalyses the reaction N-terminal L-prolyl-L-prolyl-L-lysyl-[protein] + S-adenosyl-L-methionine = N-terminal N-methyl-L-prolyl-L-prolyl-L-lysyl-[protein] + S-adenosyl-L-homocysteine + H(+). The catalysed reaction is N-terminal L-seryl-L-prolyl-L-lysyl-[protein] + S-adenosyl-L-methionine = N-terminal N-methyl-L-seryl-L-prolyl-L-lysyl-[protein] + S-adenosyl-L-homocysteine + H(+). Functionally, alpha N-methyltransferase that methylates the N-terminus of target proteins containing the N-terminal motif [Ala/Pro/Ser]-Pro-Lys when the initiator Met is cleaved. Specifically catalyzes monomethylation of exposed alpha-amino group of Ala or Ser residue in the [Ala/Ser]-Pro-Lys motif and Pro in the Pro-Pro-Lys motif. Predominantly functions as a mono-methyltransferase but is also able to di-/tri-methylate the GPKRIA peptide and di-methylate the PPKRIA peptide (in vitro). May activate NTMT1 by priming its substrates for trimethylation. The protein is N-terminal Xaa-Pro-Lys N-methyltransferase 2 (Ntmt2) of Rattus norvegicus (Rat).